An 87-amino-acid chain; its full sequence is MENDKGQLVELYVPRKCSATNRIIKAKDHGSVQINIAQVDENGHAVPGEYITYALSGYVRARGEADDSMNRLAQKDGLLKNVWSYSR.

The protein belongs to the eukaryotic ribosomal protein eS21 family. As to quaternary structure, component of the small ribosomal subunit. Mature ribosomes consist of a small (40S) and a large (60S) subunit. The 40S subunit contains about 33 different proteins and 1 molecule of RNA (18S). The 60S subunit contains about 49 different proteins and 3 molecules of RNA (25S, 5.8S and 5S).

The protein resides in the cytoplasm. Required for the processing of the 20S rRNA-precursor to mature 18S rRNA in a late step of the maturation of 40S ribosomal subunits. Has a physiological role leading to 18S rRNA stability. This is Small ribosomal subunit protein eS21 (RPS21) from Eremothecium gossypii (strain ATCC 10895 / CBS 109.51 / FGSC 9923 / NRRL Y-1056) (Yeast).